We begin with the raw amino-acid sequence, 564 residues long: Probable beta-glucosidase btgE (564 aa).

An N-terminal signal peptide occupies residues methionine 1–alanine 18. The disordered stretch occupies residues alanine 285–alanine 304. Asparagine 404 is a glycosylation site (N-linked (GlcNAc...) asparagine). Glutamate 405 (proton donor) is an active-site residue. Residue glutamate 501 is the Nucleophile of the active site.

It belongs to the glycosyl hydrolase 17 family.

It is found in the secreted. It localises to the cell wall. It catalyses the reaction Hydrolysis of terminal, non-reducing beta-D-glucosyl residues with release of beta-D-glucose.. Its pathway is glycan metabolism; cellulose degradation. Functionally, beta-glucosidases are one of a number of cellulolytic enzymes involved in the degradation of cellulosic biomass. Catalyzes the last step releasing glucose from the inhibitory cellobiose. In Aspergillus clavatus (strain ATCC 1007 / CBS 513.65 / DSM 816 / NCTC 3887 / NRRL 1 / QM 1276 / 107), this protein is Probable beta-glucosidase btgE (btgE).